The primary structure comprises 282 residues: MATPFLPAGATTGDSGGELSSGDDSGDLESFQTPEAEATRSLAELFEKAAAHVQGLVQVASREQLLYLYARYKQVKVGNCNIPKPNFFDFEGKQKWEAWKALGDSSPSQAMQEYIAAVKKLDPGWNPQVSEKKGKEGSSGFGGPVVSSLYHEETIREEDKNIFDYCRENNIDHITKAIKSKTVDVNMTDEEGRALLHWACDRGHKELVKVLLQCEAGINCQDNEGQTALHYAAACEFSDIVELLLQSGADPTLRDQDGCLPEEVTGCKAVSLVLQLHRAGKA.

Residues 1-34 (MATPFLPAGATTGDSGGELSSGDDSGDLESFQTP) form a disordered region. The residue at position 41 (Ser-41) is a Phosphoserine. Residues 42–127 (LAELFEKAAA…VKKLDPGWNP (86 aa)) form the ACB domain. Residues 69–73 (YARYK) and Lys-95 each bind an acyl-CoA. Phosphoserine is present on Ser-106. Tyr-114 contributes to the an acyl-CoA binding site. ANK repeat units lie at residues 191-220 (EGRA…GINC) and 224-253 (EGQT…DPTL).

Monomer.

It is found in the cytoplasm. The protein resides in the nucleus. Functionally, binds long-chain acyl-coenzyme A molecules with a strong preference for unsaturated C18:1-CoA, lower affinity for unsaturated C20:4-CoA, and very weak affinity for saturated C16:0-CoA. Does not bind fatty acids. Plays a role in protein N-myristoylation. This is Acyl-CoA-binding domain-containing protein 6 (Acbd6) from Rattus norvegicus (Rat).